The chain runs to 332 residues: Anthranilate phosphoribosyltransferase (332 aa).

5-phospho-alpha-D-ribose 1-diphosphate-binding positions include G79, 82–83 (GD), S87, 89–92 (NIST), 107–115 (KHGNRSVSS), and S119. G79 lines the anthranilate pocket. Residue S91 coordinates Mg(2+). Residue N110 participates in anthranilate binding. Position 165 (R165) interacts with anthranilate. The Mg(2+) site is built by D223 and E224.

Belongs to the anthranilate phosphoribosyltransferase family. As to quaternary structure, homodimer. The cofactor is Mg(2+).

It catalyses the reaction N-(5-phospho-beta-D-ribosyl)anthranilate + diphosphate = 5-phospho-alpha-D-ribose 1-diphosphate + anthranilate. Its pathway is amino-acid biosynthesis; L-tryptophan biosynthesis; L-tryptophan from chorismate: step 2/5. Functionally, catalyzes the transfer of the phosphoribosyl group of 5-phosphorylribose-1-pyrophosphate (PRPP) to anthranilate to yield N-(5'-phosphoribosyl)-anthranilate (PRA). This Sodalis glossinidius (strain morsitans) protein is Anthranilate phosphoribosyltransferase.